The chain runs to 348 residues: Propane 2-monooxygenase, reductase component (348 aa).

The 2Fe-2S ferredoxin-type domain maps to 5–95; sequence HKINFDPVDI…DCTIELLNFD (91 aa). Residues cysteine 39, cysteine 44, cysteine 47, and cysteine 79 each coordinate [2Fe-2S] cluster. Residues 105–206 form the FAD-binding FR-type domain; the sequence is IQDVRTQVQA…TGPYGSFTLK (102 aa).

Belongs to the bacterial ring-hydroxylating dioxygenase ferredoxin reductase family. In terms of assembly, the propane 2-monooxygenase multicomponent enzyme system is composed of an electron transfer component and a monooxygenase component interacting with the effector protein MimD. The electron transfer component is composed of a reductase (MimB), and the monooxygenase component is formed by a large subunit (MimA) and a small subunit (MimC). FAD serves as cofactor. It depends on [2Fe-2S] cluster as a cofactor.

Functionally, reductase component of the propane 2-monooxygenase multicomponent enzyme system which is involved in the degradation of propane via the O2-dependent hydroxylation of propane. Reductase catalyzes the transfer of electrons from NADH or NADPH to monooxygenase. This Mycolicibacterium smegmatis (strain ATCC 700084 / mc(2)155) (Mycobacterium smegmatis) protein is Propane 2-monooxygenase, reductase component.